Consider the following 278-residue polypeptide: DNA oxidative demethylase ALKBH2 (278 aa).

Residues 1–49 (MDRFLVKGAVGSLKRRMEQEQTGGGPAGLAEEEGNSKKNPRRAAPGNGV) are disordered. Residues 3–7 (RFLVK) carry the PCNA-binding motif. Substrate-binding positions include 101 to 103 (FGK) and 121 to 123 (YTF). The Fe2OG dioxygenase domain occupies 151-256 (TFNFVLINRY…RVNLTFRKIL (106 aa)). 2-oxoglutarate is bound by residues N158, Y160, and H170. 2 residues coordinate Fe cation: H170 and D172. Residue D173 participates in substrate binding. Positions 235, 247, 251, and 253 each coordinate 2-oxoglutarate. H235 contributes to the Fe cation binding site.

The protein belongs to the alkB family. As to quaternary structure, interacts with PCNA homotrimer; this interaction is enhanced during the S-phase of the cell cycle. Interacts with nucleolar proteins NCL, UBTF and NPM1. Interacts with XRCC5-XRCC6 heterodimer. Fe(2+) is required as a cofactor.

Its subcellular location is the nucleus. It is found in the nucleolus. The protein resides in the nucleoplasm. It carries out the reaction a methylated nucleobase within DNA + 2-oxoglutarate + O2 = a nucleobase within DNA + formaldehyde + succinate + CO2. The enzyme catalyses an N(1)-methyl-2'-deoxyadenosine in double-stranded DNA + 2-oxoglutarate + O2 = a 2'-deoxyadenosine in double-stranded DNA + formaldehyde + succinate + CO2 + H(+). The catalysed reaction is an N(1)-methyl-2'-deoxyadenosine in single-stranded DNA + 2-oxoglutarate + O2 = a 2'-deoxyadenosine in single-stranded DNA + formaldehyde + succinate + CO2 + H(+). It catalyses the reaction an N(3)-methyl-2'-deoxycytidine in double-stranded DNA + 2-oxoglutarate + O2 = a 2'-deoxycytidine in double-stranded DNA + formaldehyde + succinate + CO2 + H(+). It carries out the reaction an N(3)-methyl-2'-deoxycytidine in single-stranded DNA + 2-oxoglutarate + O2 = a 2'-deoxycytidine in single-stranded DNA + formaldehyde + succinate + CO2 + H(+). The enzyme catalyses a 1,N(6)-etheno-2'-deoxyadenosine in double-stranded DNA + 2-oxoglutarate + O2 + H2O = a 2'-deoxyadenosine in double-stranded DNA + glyoxal + succinate + CO2. The catalysed reaction is a 1,N(6)-etheno-2'-deoxyadenosine in single-stranded DNA + 2-oxoglutarate + O2 + H2O = a 2'-deoxyadenosine in single-stranded DNA + glyoxal + succinate + CO2. It catalyses the reaction a 3,N(4)-etheno-2'-deoxycytidine in double-stranded DNA + 2-oxoglutarate + O2 + H2O = a 2'-deoxycytidine in double-stranded DNA + glyoxal + succinate + CO2. It carries out the reaction a 3,N(4)-etheno-2'-deoxycytidine in single-stranded DNA + 2-oxoglutarate + O2 + H2O = a 2'-deoxycytidine in single-stranded DNA + glyoxal + succinate + CO2. The enzyme catalyses a 1,N(2)-etheno-2'-deoxyguanosine in double-stranded DNA + 2-oxoglutarate + O2 + H2O = a 2'-deoxyguanosine in double-stranded DNA + glyoxal + succinate + CO2. With respect to regulation, activated by ascorbate and magnesium ions. Dioxygenase that repairs alkylated nucleic acid bases by direct reversal oxidative dealkylation. Can process both double-stranded (ds) and single-stranded (ss) DNA substrates, with a strong preference for dsDNA. Uses molecular oxygen, 2-oxoglutarate and iron as cofactors to oxidize the alkyl groups that are subsequently released as aldehydes, regenerating the undamaged bases. Probes the base pair stability, locates a weakened base pair and flips the damaged base to accommodate the lesion in its active site for efficient catalysis. Repairs monoalkylated bases, specifically N1-methyladenine and N3-methylcytosine, as well as higher order alkyl adducts such as bases modified with exocyclic bridged adducts known as etheno adducts including 1,N6-ethenoadenine, 3,N4-ethenocytosine and 1,N2-ethenoguanine. Acts as a gatekeeper of genomic integrity under alkylation stress. Efficiently repairs alkylated lesions in ribosomal DNA (rDNA). These lesions can cause ss- and dsDNA strand breaks that severely impair rDNA transcription. In a response mechanism to DNA damage, associates with PCNA at replication forks to repair alkylated adducts prior to replication. In Bos taurus (Bovine), this protein is DNA oxidative demethylase ALKBH2 (ALKBH2).